We begin with the raw amino-acid sequence, 318 residues long: Basic leucine zipper (bZIP) transcription factor atfB (318 aa).

The segment at 114–157 (FNSSPPEYAPPKHRSSLSEQSQTDGYGVSTRRRKASAIDQCEQQ) is disordered. The interval 160-199 (REKREKFLERNRLAASKCRQKKKEHTKLLETRFREVSNKK) is basic motif. Positions 160–223 (REKREKFLER…LNLKNEMLRH (64 aa)) constitute a bZIP domain. Residues 202 to 216 (LESEIEHLRSEVLNL) form a leucine-zipper region. The segment at 275–301 (DGPMQLPSEMGSPLDQRRDSEQSIMTE) is disordered.

Belongs to the bZIP family. ATF subfamily.

The protein localises to the nucleus. Functionally, transcription factor that acts as a key player in the regulatory circuit that integrates secondary metabolism and cellular response to oxidative stress. Regulates the genes involved in development and stress response through direct binding to their promoters. The sequence is that of Basic leucine zipper (bZIP) transcription factor atfB from Aspergillus flavus (strain ATCC 200026 / FGSC A1120 / IAM 13836 / NRRL 3357 / JCM 12722 / SRRC 167).